The primary structure comprises 2276 residues: Non-reducing polyketide synthase VdtA (2276 aa).

The tract at residues 8-243 (YLFGDQTYDY…KDIPIHAPYH (236 aa)) is N-terminal acylcarrier protein transacylase (SAT) domain. In terms of domain architecture, Ketosynthase family 3 (KS3) spans 372 to 804 (RAKIAIVGMS…GGNSSVLVED (433 aa)). Residues Cys544, His679, and His723 each act as for beta-ketoacyl synthase activity in the active site. Residues 905–1206 (FTFTGQGAQY…KALPTLQRNR (302 aa)) are malonyl-CoA:ACP transacylase (MAT) domain. Ser996 (for acyl/malonyl transferase activity) is an active-site residue. Residues 1300 to 1616 (TTTLHRIVDE…PRRVLRYILQ (317 aa)) are product template (PT) domain. Residues 1304-1438 (HRIVDEKSTE…CRIKFSDRST (135 aa)) are N-terminal hotdog fold. One can recognise a PKS/mFAS DH domain in the interval 1304 to 1612 (HRIVDEKSTE…IQGVPRRVLR (309 aa)). His1336 functions as the Proton acceptor; for dehydratase activity in the catalytic mechanism. The tract at residues 1465–1612 (TYRFNGPMAY…IQGVPRRVLR (148 aa)) is C-terminal hotdog fold. Asp1525 serves as the catalytic Proton donor; for dehydratase activity. Positions 1655 to 1729 (SGTLTEALRI…DLKRFFDKIN (75 aa)) constitute a Carrier 1 domain. Ser1689 is subject to O-(pantetheine 4'-phosphoryl)serine. Positions 1735 to 1762 (APAPVSDAPKQLQPSSSPVASATPSAPI) are disordered. The span at 1748 to 1761 (PSSSPVASATPSAP) shows a compositional bias: low complexity. The Carrier 2 domain occupies 1765–1839 (RSKFESVLNI…DLKAHFMSKN (75 aa)). An O-(pantetheine 4'-phosphoryl)serine modification is found at Ser1799. Positions 1840-1854 (SDNGSSAVLTPQPSR) are enriched in polar residues. The segment at 1840-1882 (SDNGSSAVLTPQPSRDSALPERTRPRVADTSDEEDAPVSANEF) is disordered. Basic and acidic residues predominate over residues 1857-1868 (ALPERTRPRVAD). A Carrier 3 domain is found at 1886–1964 (ARSTSKYMAV…GLRSFFGFES (79 aa)). Residue Ser1923 is modified to O-(pantetheine 4'-phosphoryl)serine. Positions 1967 to 1993 (TATNPTASQSSSSISSGTSVFDTSPSP) are disordered. Low complexity predominate over residues 1969–1990 (TNPTASQSSSSISSGTSVFDTS). The segment at 2020–2271 (PLPPATSVTL…GADHFSLLVS (252 aa)) is thioesterase (TE) domain.

The protein localises to the cytoplasmic vesicle. The enzyme catalyses 7 malonyl-CoA + acetyl-CoA + 7 H(+) = 7,9,10-trihydroxy-3-(2-oxopropyl)-1H-benzo[g]isochromen-1-one + 7 CO2 + 8 CoA + 2 H2O. It participates in secondary metabolite biosynthesis. Functionally, non-reducing polyketide synthase; part of the gene cluster that mediates the biosynthesis of viriditoxin, one of the 'classical' secondary metabolites produced by fungi and that has antibacterial activity. The first step is performed by the polyketide synthase VdtA which condenses one acetyl-CoA and 6 malonyl-CoA units to form the heptaketide monomer backbone of viriditoxin. The product of VdtA is then O-methylated on C7 by the O-methyltransferase VdtC. The O-methyl group is important for the stereoselective coupling of the monomers at the final step of viriditoxin biosynthesis. The short-chain dehydrogenase/reductase VdtF then acts as a stereospecific reductase converting the pyrone to dihydropyrone via the reduction of the C3-C4 double bond. The FAD-binding monooxygenase VdtE then converts the ketone group into a methyl-ester group to yield semi-viriditoxin. Finally, the laccase VdtB is involved in dimerization of 2 semi-viriditoxin molecules to yield the final viriditoxin. VdtB is responsible for the regioselective 6,6'-coupling of semi-viriditoxin, which yields (M)-viriditoxin and (P)-viriditoxin at a ratio of 1:2. The non-catalytic carboxylesterase-like protein VdtD affects the stereochemistical outcome of the coupling. The highly reducing polyketide synthase VdtX is not involved in viriditoxin synthesis, but might possibly play a role in the production of additional metabolites not identified yet. The chain is Non-reducing polyketide synthase VdtA from Byssochlamys spectabilis (Paecilomyces variotii).